Here is a 278-residue protein sequence, read N- to C-terminus: MSRVNFDQLLEAGVHFGHLKRKWNPAMAPYIFMERNGIHIIDLYKTVAKVDEAAEVMKNLAKQGKKVLFVATKKQAKQVVADKAASVGMPYVIERWPGGMLTNFPTIRKAIKKMATIDKMTKDGTFDNLSKREKLQITRQRAKLEKTLGSIVDLTRLPSALFVVDVMKEHIAVREANRLGIPVFGMVDTNSNPNNIDYVIPANDDATKSVEVILGAICEAMNEGLQERKAEKIDAEAAEEAPKRERKAKAAVKKERTKKEDDDALNANVAGKFAKDEE.

The tract at residues 235–278 (AEAAEEAPKRERKAKAAVKKERTKKEDDDALNANVAGKFAKDEE) is disordered. The segment covering 252 to 261 (VKKERTKKED) has biased composition (basic and acidic residues).

The protein belongs to the universal ribosomal protein uS2 family.

In Parabacteroides distasonis (strain ATCC 8503 / DSM 20701 / CIP 104284 / JCM 5825 / NCTC 11152), this protein is Small ribosomal subunit protein uS2.